The primary structure comprises 893 residues: Exocyst complex component 4 (893 aa).

The segment at 1–27 (MNENGATPVAAARRHRPLPAERATSNS) is disordered.

This sequence belongs to the SEC8 family. As to quaternary structure, the exocyst complex is composed of sec-3/exoc1, sec-5/exoc2, sec-6/exoc3, sec-8/exoc4, sec-10/exoc5, sec-15/exoc6, exo-70/exoc7 and exo-84/exoc8. As to expression, pseudocoelom.

Component of the exocyst complex involved in the docking of exocytic vesicles with fusion sites on the plasma membrane. In Caenorhabditis elegans, this protein is Exocyst complex component 4 (sec-8).